The sequence spans 108 residues: MATPRVHVKKGDTVMVITGKDAGKKGKVLSVEPARGRVVVEGVNIVKRHTRPTQKMPQGGIIEKEAPVASSNVMLFCNKCNRPTRIGRQILADGTKTRVCKKCGEVID.

It belongs to the universal ribosomal protein uL24 family. As to quaternary structure, part of the 50S ribosomal subunit.

Functionally, one of two assembly initiator proteins, it binds directly to the 5'-end of the 23S rRNA, where it nucleates assembly of the 50S subunit. In terms of biological role, one of the proteins that surrounds the polypeptide exit tunnel on the outside of the subunit. The chain is Large ribosomal subunit protein uL24 from Moorella thermoacetica (strain ATCC 39073 / JCM 9320).